The primary structure comprises 282 residues: MIVSGLSGSGKSVALKTFEDLDYYCSDNLPVELLPDFVKSRLRGNPVGDQRLAVGIDVRSRSDLTQLAQWRQAAQEYGIEARLLFFEASDEALIKRYADTRRRHPLSHLGLALPEAITRERQLTEPLRTQADAVIDTSTLNVHQLRRRVVTEFALGSHDRLSLLFESFAYKRGVPAEADFVFDARVLPNPHWDPELRPLTGRDAGVREYLDNEADVQRYSAQIVDLLDTWLPRLRNDTRSYVTIAFGCTGGKHRSVYMAERMARHAREQGWPEVATFHREQD.

Gly5–Ser12 is a binding site for ATP. Asp57 to Ser60 is a GTP binding site.

The protein belongs to the RapZ-like family.

Its function is as follows. Displays ATPase and GTPase activities. The sequence is that of Nucleotide-binding protein XAC2976 from Xanthomonas axonopodis pv. citri (strain 306).